A 98-amino-acid polypeptide reads, in one-letter code: Small ribosomal subunit protein uS19 (98 aa).

2 disordered regions span residues 1 to 30 and 78 to 98; these read MARSIKKGPFADKHLTKKVEDANKGNKKSV and RTFHGHSAEKKAAAAPGPAKK. A compositionally biased stretch (basic and acidic residues) spans 9–24; the sequence is PFADKHLTKKVEDANK.

This sequence belongs to the universal ribosomal protein uS19 family.

In terms of biological role, protein S19 forms a complex with S13 that binds strongly to the 16S ribosomal RNA. The protein is Small ribosomal subunit protein uS19 of Anaeromyxobacter dehalogenans (strain 2CP-C).